The chain runs to 262 residues: MKIRVGVIGCLGRMGKKILNELITNTKVEIAGAVARLGSEYIGLDIGPIVGNNCNLGIKITSSISEVFESSDVVIDFTTKECMLECLKAAVKFKKPLVSGTTGIEGLNLKDYAAKVPILWSANMSIGVNVLLKLVKEAAKLLGNEYDVEIWEMHHNLKKDSPSGTAIEFGKAVANAAKVDFELNQYSHNNSNIRGKGGIGFAVSRGGGVIGDHSVMFVNYDERVELNHKAIDRTTFARGAVQAAIWLCENKTPGLYSMQDLV.

9-14 (GCLGRM) is a binding site for NAD(+). Arg36 contributes to the NADP(+) binding site. NAD(+) is bound by residues 100 to 102 (GTT) and 121 to 124 (SANM). His154 acts as the Proton donor/acceptor in catalysis. Residue His155 coordinates (S)-2,3,4,5-tetrahydrodipicolinate. Residue Lys158 is the Proton donor of the active site. 164-165 (GT) is a (S)-2,3,4,5-tetrahydrodipicolinate binding site.

It belongs to the DapB family.

It localises to the cytoplasm. The catalysed reaction is (S)-2,3,4,5-tetrahydrodipicolinate + NAD(+) + H2O = (2S,4S)-4-hydroxy-2,3,4,5-tetrahydrodipicolinate + NADH + H(+). It carries out the reaction (S)-2,3,4,5-tetrahydrodipicolinate + NADP(+) + H2O = (2S,4S)-4-hydroxy-2,3,4,5-tetrahydrodipicolinate + NADPH + H(+). It participates in amino-acid biosynthesis; L-lysine biosynthesis via DAP pathway; (S)-tetrahydrodipicolinate from L-aspartate: step 4/4. In terms of biological role, catalyzes the conversion of 4-hydroxy-tetrahydrodipicolinate (HTPA) to tetrahydrodipicolinate. In Wolbachia pipientis subsp. Culex pipiens (strain wPip), this protein is 4-hydroxy-tetrahydrodipicolinate reductase.